The following is an 83-amino-acid chain: Toxin TdNa5 (83 aa).

The first 20 residues, 1–20 (MKTIIFFIACLMLIDVVVES), serve as a signal peptide directing secretion. The region spanning 21–82 (KDGYIIEHRG…IFDSNNNKCG (62 aa)) is the LCN-type CS-alpha/beta domain. 4 disulfide bridges follow: Cys31/Cys81, Cys35/Cys57, Cys43/Cys62, and Cys47/Cys64. A Cysteine amide modification is found at Cys81.

Belongs to the long (4 C-C) scorpion toxin superfamily. Sodium channel inhibitor family. Beta subfamily. In terms of tissue distribution, expressed by the venom gland.

The protein localises to the secreted. Its function is as follows. Inhibits the sodium currents (Nav) in an apparent irreversible manner. Produces small depolarization and induces repetitive firing in squid axons. Is specific for arthropods (crickets, triatomides, crabs and squids), but is non-toxic to mice. Shows antibacterial activity against both Gram-positive and Gram-negative bacteria. In Tityus discrepans (Venezuelan scorpion), this protein is Toxin TdNa5.